The chain runs to 213 residues: MKNWKTSAEQILTAGPVVPVIVINKLEHAVPMAKALVAGGVRVLELTLRTECAVEAIRLIAQEVPDAIVGAGTVTNPQQLAEVTAAGAQFAISPGLTEPLLKAATEGTIPLIPGISTVSELMLGMDYGLREFKFFPAEANGGVKALQAIAGPFGKIRFCPTGGISLKNYRDYLALKSVLCVGGSWLVPADALESGDYDRITALAREAVAGATA.

The active-site Proton acceptor is the glutamate 45. 3 residues coordinate pyruvate: arginine 49, threonine 73, and lysine 133. Residue lysine 133 is the Schiff-base intermediate with substrate of the active site.

The protein belongs to the KHG/KDPG aldolase family. Homotrimer.

Its subcellular location is the cytoplasm. The enzyme catalyses 2-dehydro-3-deoxy-6-phospho-D-gluconate = D-glyceraldehyde 3-phosphate + pyruvate. It participates in carbohydrate acid metabolism; 2-dehydro-3-deoxy-D-gluconate degradation; D-glyceraldehyde 3-phosphate and pyruvate from 2-dehydro-3-deoxy-D-gluconate: step 2/2. Involved in the degradation of glucose via the Entner-Doudoroff pathway. Catalyzes the reversible, stereospecific retro-aldol cleavage of 2-keto-3-deoxy-6-phosphogluconate (KDPG) to pyruvate and D-glyceraldehyde-3-phosphate. The polypeptide is 2-dehydro-3-deoxy-phosphogluconate aldolase (eda) (Dickeya dadantii (strain 3937) (Erwinia chrysanthemi (strain 3937))).